The primary structure comprises 451 residues: Porin AaxA (451 aa).

The N-terminal stretch at 1 to 27 (MASFHSSLLTALCTLCTYGILTMPAYG) is a signal peptide.

This sequence belongs to the OprB family.

The protein localises to the cell outer membrane. In terms of biological role, facilitates L-arginine uptake, as part of the AaxABC system. The arginine uptake by the bacterium in the macrophage may be a virulence factor against the host innate immune response. In Chlamydia caviae (strain ATCC VR-813 / DSM 19441 / 03DC25 / GPIC) (Chlamydophila caviae), this protein is Porin AaxA (aaxA).